We begin with the raw amino-acid sequence, 385 residues long: Rhomboid domain-containing protein 3 (385 aa).

The next 5 helical transmembrane spans lie at 13-33, 58-78, 95-115, 146-166, and 168-188; these read ALPL…LLGA, LGHT…TLGW, VLAL…VSGA, WLLP…PPFL, and LLCG…WLEL. Positions 238–264 are disordered; that stretch reads PPYLASSDSWPHSDGSAQLPPRLGPGQ. Residues 322 to 361 form the UBA domain; that stretch reads SVSSLRLQQLQHMGFPTEQAAVALAATGRVEGAVSLLVEG.

The protein resides in the membrane. This chain is Rhomboid domain-containing protein 3 (Rhbdd3), found in Mus musculus (Mouse).